The following is a 265-amino-acid chain: Protein N-terminal and lysine N-methyltransferase EFM7 (265 aa).

The segment at 1–25 is disordered; sequence MSSDHEEDSLYGATELFGEPDGFYE. S-adenosyl-L-methionine is bound by residues tryptophan 67, 93-95, aspartate 115, tryptophan 152, and serine 176; that span reads GAA.

The protein belongs to the class I-like SAM-binding methyltransferase superfamily. EFM7 family.

It is found in the cytoplasm. S-adenosyl-L-methionine-dependent protein methyltransferase that trimethylates the N-terminal glycine 'Gly-2' of elongation factor 1-alpha, before also catalyzing the mono- and dimethylation of 'Lys-3'. The protein is Protein N-terminal and lysine N-methyltransferase EFM7 of Eremothecium gossypii (strain ATCC 10895 / CBS 109.51 / FGSC 9923 / NRRL Y-1056) (Yeast).